The sequence spans 497 residues: Serine hydroxymethyltransferase, mitochondrial (497 aa).

The N-terminal 27 residues, 1-27 (MFIRRLHTSSRRLTCGEALRACQQTGA), are a transit peptide targeting the mitochondrion. Lysine 272 carries the post-translational modification N6-(pyridoxal phosphate)lysine.

Belongs to the SHMT family. As to quaternary structure, homotetramer. It depends on pyridoxal 5'-phosphate as a cofactor.

The protein resides in the mitochondrion. It catalyses the reaction (6R)-5,10-methylene-5,6,7,8-tetrahydrofolate + glycine + H2O = (6S)-5,6,7,8-tetrahydrofolate + L-serine. It functions in the pathway one-carbon metabolism; tetrahydrofolate interconversion. Functionally, interconversion of serine and glycine. The polypeptide is Serine hydroxymethyltransferase, mitochondrial (SHM1) (Eremothecium gossypii (strain ATCC 10895 / CBS 109.51 / FGSC 9923 / NRRL Y-1056) (Yeast)).